A 124-amino-acid chain; its full sequence is Large ribosomal subunit protein bL19 (124 aa).

This sequence belongs to the bacterial ribosomal protein bL19 family.

In terms of biological role, this protein is located at the 30S-50S ribosomal subunit interface and may play a role in the structure and function of the aminoacyl-tRNA binding site. In Zymomonas mobilis subsp. mobilis (strain ATCC 31821 / ZM4 / CP4), this protein is Large ribosomal subunit protein bL19.